A 208-amino-acid chain; its full sequence is Protein-L-isoaspartate O-methyltransferase (208 aa).

Ser-59 is an active-site residue.

The protein belongs to the methyltransferase superfamily. L-isoaspartyl/D-aspartyl protein methyltransferase family.

Its subcellular location is the cytoplasm. It carries out the reaction [protein]-L-isoaspartate + S-adenosyl-L-methionine = [protein]-L-isoaspartate alpha-methyl ester + S-adenosyl-L-homocysteine. In terms of biological role, catalyzes the methyl esterification of L-isoaspartyl residues in peptides and proteins that result from spontaneous decomposition of normal L-aspartyl and L-asparaginyl residues. It plays a role in the repair and/or degradation of damaged proteins. The chain is Protein-L-isoaspartate O-methyltransferase from Vibrio parahaemolyticus serotype O3:K6 (strain RIMD 2210633).